The primary structure comprises 363 residues: Transcriptional regulator AacuR (363 aa).

Residues 1–24 are disordered; it reads MTSLQCPPPDRTRRSLSPTGPKFR. The zn(2)-C6 fungal-type DNA-binding region spans 27–54; sequence CKSCAASKIRCTKEKPQCARCVKRNMVC. A compositionally biased stretch (basic residues) spans 63-72; it reads RRKPGARLKH. The segment at 63–104 is disordered; that stretch reads RRKPGARLKHRESITTNAHHSPTTTTITTSRTTSSSPSASPK. Residues 76-102 show a composition bias toward low complexity; sequence ITTNAHHSPTTTTITTSRTTSSSPSAS.

The protein localises to the nucleus. Functionally, transcriptional regulator; part of the gene cluster that mediates the biosynthesis of the tetrahydroxanthone dimer secalonic acid D. In Aspergillus aculeatus (strain ATCC 16872 / CBS 172.66 / WB 5094), this protein is Transcriptional regulator AacuR.